A 215-amino-acid polypeptide reads, in one-letter code: Fibroblast growth factor 10 (215 aa).

A signal peptide spans 1–36; the sequence is MWKWILTHCASAFPHLPGCCCCFLLLFLVSSVPVTC. Residues 49 to 73 are disordered; it reads TNSSSSSSSSSSSSSFSSPSSAGRH. The N-linked (GlcNAc...) asparagine glycan is linked to Asn50. The span at 51–69 shows a compositional bias: low complexity; sequence SSSSSSSSSSSSSFSSPSS. Asn203 is a glycosylation site (N-linked (GlcNAc...) asparagine).

This sequence belongs to the heparin-binding growth factors family. As to quaternary structure, interacts with FGFR1 and FGFR2. Interacts with FGFBP1. As to expression, preferentially expressed in the lung in adults.

Its subcellular location is the secreted. Its function is as follows. Plays an important role in the regulation of embryonic development, cell proliferation and cell differentiation. Required for normal branching morphogenesis. May play a role in wound healing. The polypeptide is Fibroblast growth factor 10 (Fgf10) (Rattus norvegicus (Rat)).